Consider the following 208-residue polypeptide: Riboflavin synthase (208 aa).

Lumazine-binding repeat units follow at residues 1–97 (MFTG…MGGH) and 98–195 (IISG…VDTT). Residues 4 to 6 (GIV), 48 to 50 (CLT), 62 to 67 (DIMKIT), 101 to 103 (GHI), Lys137, 146 to 148 (SLT), and 160 to 165 (SIIPET) contribute to the 2,4-dihydroxypteridine site.

As to quaternary structure, homotrimer.

The enzyme catalyses 2 6,7-dimethyl-8-(1-D-ribityl)lumazine + H(+) = 5-amino-6-(D-ribitylamino)uracil + riboflavin. It functions in the pathway cofactor biosynthesis; riboflavin biosynthesis; riboflavin from 2-hydroxy-3-oxobutyl phosphate and 5-amino-6-(D-ribitylamino)uracil: step 2/2. Catalyzes the dismutation of two molecules of 6,7-dimethyl-8-ribityllumazine, resulting in the formation of riboflavin and 5-amino-6-(D-ribitylamino)uracil. The sequence is that of Riboflavin synthase (ribE) from Buchnera aphidicola subsp. Schizaphis graminum (strain Sg).